A 510-amino-acid polypeptide reads, in one-letter code: ATP synthase subunit alpha (510 aa).

169–176 (GDRQTGKT) contacts ATP.

The protein belongs to the ATPase alpha/beta chains family. As to quaternary structure, F-type ATPases have 2 components, CF(1) - the catalytic core - and CF(0) - the membrane proton channel. CF(1) has five subunits: alpha(3), beta(3), gamma(1), delta(1), epsilon(1). CF(0) has three main subunits: a(1), b(2) and c(9-12). The alpha and beta chains form an alternating ring which encloses part of the gamma chain. CF(1) is attached to CF(0) by a central stalk formed by the gamma and epsilon chains, while a peripheral stalk is formed by the delta and b chains.

Its subcellular location is the cell inner membrane. It carries out the reaction ATP + H2O + 4 H(+)(in) = ADP + phosphate + 5 H(+)(out). Produces ATP from ADP in the presence of a proton gradient across the membrane. The alpha chain is a regulatory subunit. In Rickettsia massiliae (strain Mtu5), this protein is ATP synthase subunit alpha.